The primary structure comprises 468 residues: 3-isopropylmalate dehydratase large subunit 2 (468 aa).

[4Fe-4S] cluster is bound by residues C349, C409, and C412.

The protein belongs to the aconitase/IPM isomerase family. LeuC type 1 subfamily. In terms of assembly, heterodimer of LeuC and LeuD. [4Fe-4S] cluster is required as a cofactor.

The catalysed reaction is (2R,3S)-3-isopropylmalate = (2S)-2-isopropylmalate. Its pathway is amino-acid biosynthesis; L-leucine biosynthesis; L-leucine from 3-methyl-2-oxobutanoate: step 2/4. Functionally, catalyzes the isomerization between 2-isopropylmalate and 3-isopropylmalate, via the formation of 2-isopropylmaleate. The chain is 3-isopropylmalate dehydratase large subunit 2 from Bradyrhizobium diazoefficiens (strain JCM 10833 / BCRC 13528 / IAM 13628 / NBRC 14792 / USDA 110).